A 525-amino-acid polypeptide reads, in one-letter code: Cytochrome P450 4V2 (525 aa).

Residues 13–33 (LLLWGAASALSLAGASLVLSL) form a helical membrane-spanning segment. E329 and C467 together coordinate heme.

It belongs to the cytochrome P450 family. It depends on heme as a cofactor. As to expression, broadly expressed. Detected in heart, brain, placenta, lung, liver, skeletal muscle, kidney, pancreas, retina, retinal pigment epithelium (RPE) and lymphocytes.

The protein localises to the endoplasmic reticulum membrane. It carries out the reaction dodecanoate + reduced [NADPH--hemoprotein reductase] + O2 = 12-hydroxydodecanoate + oxidized [NADPH--hemoprotein reductase] + H2O + H(+). The catalysed reaction is tetradecanoate + reduced [NADPH--hemoprotein reductase] + O2 = 14-hydroxytetradecanoate + oxidized [NADPH--hemoprotein reductase] + H2O + H(+). It catalyses the reaction hexadecanoate + reduced [NADPH--hemoprotein reductase] + O2 = 16-hydroxyhexadecanoate + oxidized [NADPH--hemoprotein reductase] + H2O + H(+). The enzyme catalyses (5Z,8Z,11Z,14Z,17Z)-eicosapentaenoate + reduced [NADPH--hemoprotein reductase] + O2 = 20-hydroxy-(5Z,8Z,11Z,14Z,17Z)-eicosapentaenoate + oxidized [NADPH--hemoprotein reductase] + H2O + H(+). It carries out the reaction (4Z,7Z,10Z,13Z,16Z,19Z)-docosahexaenoate + reduced [NADPH--hemoprotein reductase] + O2 = 22-hydroxy-(4Z,7Z,10Z,13Z,16Z,19Z)-docosahexaenoate + oxidized [NADPH--hemoprotein reductase] + H2O + H(+). It functions in the pathway lipid metabolism; fatty acid metabolism. With respect to regulation, inhibited by N-hydroxy-N'-(4-n-butyl-2-methylphenyl formamidine)(HET0016) with an IC(50) of 38 nM. Its function is as follows. A cytochrome P450 monooxygenase involved in fatty acid metabolism in the eye. Catalyzes the omega-hydroxylation of polyunsaturated fatty acids (PUFAs) docosahexaenoate (DHA) and its precursor eicosapentaenoate (EPA), and may contribute to the homeostasis of these retinal PUFAs. Omega hydroxylates saturated fatty acids such as laurate, myristate and palmitate, the catalytic efficiency decreasing in the following order: myristate &gt; laurate &gt; palmitate (C14&gt;C12&gt;C16). Mechanistically, uses molecular oxygen inserting one oxygen atom into a substrate, and reducing the second into a water molecule, with two electrons provided by NADPH via cytochrome P450 reductase (CPR; NADPH-ferrihemoprotein reductase). In Homo sapiens (Human), this protein is Cytochrome P450 4V2 (CYP4V2).